The following is a 119-amino-acid chain: Small ribosomal subunit protein bS16 (119 aa).

This sequence belongs to the bacterial ribosomal protein bS16 family.

This is Small ribosomal subunit protein bS16 from Chlamydia felis (strain Fe/C-56) (Chlamydophila felis).